Reading from the N-terminus, the 360-residue chain is Phospho-N-acetylmuramoyl-pentapeptide-transferase (360 aa).

10 helical membrane-spanning segments follow: residues 25 to 45 (RGIL…PWMI), 73 to 93 (TMGG…WADL), 97 to 117 (YVWT…VDDY), 132 to 152 (WKYF…YMTA), 167 to 187 (TIEI…IVGS), 199 to 219 (GLAI…CYLS), 236 to 256 (AGEL…FLWF), 263 to 283 (VFMG…IAVI), 288 to 308 (VVLF…MIQV), and 338 to 358 (VIVR…ATLK).

This sequence belongs to the glycosyltransferase 4 family. MraY subfamily. The cofactor is Mg(2+).

It is found in the cell inner membrane. It catalyses the reaction UDP-N-acetyl-alpha-D-muramoyl-L-alanyl-gamma-D-glutamyl-meso-2,6-diaminopimeloyl-D-alanyl-D-alanine + di-trans,octa-cis-undecaprenyl phosphate = di-trans,octa-cis-undecaprenyl diphospho-N-acetyl-alpha-D-muramoyl-L-alanyl-D-glutamyl-meso-2,6-diaminopimeloyl-D-alanyl-D-alanine + UMP. Its pathway is cell wall biogenesis; peptidoglycan biosynthesis. In terms of biological role, catalyzes the initial step of the lipid cycle reactions in the biosynthesis of the cell wall peptidoglycan: transfers peptidoglycan precursor phospho-MurNAc-pentapeptide from UDP-MurNAc-pentapeptide onto the lipid carrier undecaprenyl phosphate, yielding undecaprenyl-pyrophosphoryl-MurNAc-pentapeptide, known as lipid I. The sequence is that of Phospho-N-acetylmuramoyl-pentapeptide-transferase from Azotobacter vinelandii (strain DJ / ATCC BAA-1303).